We begin with the raw amino-acid sequence, 495 residues long: Glycerol kinase (495 aa).

Threonine 11 is an ADP binding site. Threonine 11, threonine 12, and serine 13 together coordinate ATP. Threonine 11 serves as a coordination point for sn-glycerol 3-phosphate. ADP is bound at residue arginine 15. Positions 81, 82, 133, and 242 each coordinate sn-glycerol 3-phosphate. The glycerol site is built by arginine 81, glutamate 82, tyrosine 133, aspartate 242, and glutamine 243. Positions 264 and 307 each coordinate ADP. Threonine 264, glycine 307, glutamine 311, and glycine 408 together coordinate ATP. Glycine 408 is an ADP binding site.

It belongs to the FGGY kinase family.

It catalyses the reaction glycerol + ATP = sn-glycerol 3-phosphate + ADP + H(+). Its pathway is polyol metabolism; glycerol degradation via glycerol kinase pathway; sn-glycerol 3-phosphate from glycerol: step 1/1. Inhibited by fructose 1,6-bisphosphate (FBP). Key enzyme in the regulation of glycerol uptake and metabolism. Catalyzes the phosphorylation of glycerol to yield sn-glycerol 3-phosphate. In Geobacter sp. (strain M21), this protein is Glycerol kinase.